The sequence spans 814 residues: Cellulase/esterase CelE (814 aa).

The signal sequence occupies residues 1 to 34 (MKKIVSLVCVLVMLVSILGSFSVVAASPVKGFQV). The segment at 35–354 (SGTKLLDASG…AVFWWDNGYY (320 aa)) is cellulase. The active-site Proton donor; for cellulase activity is glutamate 193. The Nucleophile; for cellulase activity role is filled by glutamate 316. The Dockerin domain maps to 409–479 (ANILYGDVNG…LLRSIDKFPA (71 aa)). 12 residues coordinate Ca(2+): aspartate 415, asparagine 417, aspartate 419, glycine 420, lysine 421, aspartate 426, aspartate 451, valine 452, asparagine 453, aspartate 455, lysine 457, and aspartate 462. Residues 490 to 814 (PGILYNGRFD…TAEIKNKLGW (325 aa)) form an esterase region. The active-site Nucleophile; for esterase activity is serine 612.

In the N-terminal section; belongs to the glycosyl hydrolase 5 (cellulase A) family. The protein in the C-terminal section; belongs to the carbohydrate esterase 2 (CE2) family.

The protein resides in the secreted. It catalyses the reaction Endohydrolysis of (1-&gt;4)-beta-D-glucosidic linkages in cellulose, lichenin and cereal beta-D-glucans.. The catalysed reaction is Deacetylation of xylans and xylo-oligosaccharides.. The protein operates within glycan metabolism; cellulose degradation. It participates in glycan degradation; xylan degradation. Esterase activity of the CE2 module is inhibited when this domain binds to cellohexaose or beta-glucan. In terms of biological role, multifunctional enzyme involved in the degradation of plant cell wall polysaccharides. Displays endoglucanase activity against carboxymethyl cellulose (CMC) and barley beta-glucan. Also catalyzes the deacetylation of acetylated birchwood xylan and glucomannan, with a preference for the latter, and of the synthetic substrate 4-nitrophenyl acetate (4-NPAc). The polypeptide is Cellulase/esterase CelE (Acetivibrio thermocellus (strain ATCC 27405 / DSM 1237 / JCM 9322 / NBRC 103400 / NCIMB 10682 / NRRL B-4536 / VPI 7372) (Clostridium thermocellum)).